A 308-amino-acid polypeptide reads, in one-letter code: HTH-type transcriptional activator AllS (308 aa).

In terms of domain architecture, HTH lysR-type spans 2 to 59; the sequence is FDPETLRTFIAVAETGSFSKAAERLCKTTATISYRIKLLEENTGVALFFRTTRSVTLT. Residues 19–38 constitute a DNA-binding region (H-T-H motif); that stretch reads FSKAAERLCKTTATISYRIK.

Belongs to the LysR transcriptional regulatory family.

Positive regulator essential for the expression of AllD operon. Binds to the AllD promoter. This chain is HTH-type transcriptional activator AllS (allS), found in Escherichia coli O157:H7.